Reading from the N-terminus, the 417-residue chain is MPQLSASSLFICLWLVDLCHVANSVLSSSFSDLHTQFGISLYQTLTETENKSNLIVSPASVSLCLGLLQLGARGNTLVQLEGTLGYDVNDVRVQNILSRPQGDLANSSEGLRLQLANALFIQTGVKLLPEFTQHALGWGNTSLLSVNFSNPNHTHSRLQQWAHYQSKADDHLQTREELHHSSGEEEEATRQDHLLYMALVSTLVFHGAWQKQFLFTETQNLPFTFSDGSTVKVPMMYQSSEVNIGHFRLPSEQEYTVLELPYLDHSLRLLVALPSDRKTPLSQLEKQITARAVGLWDTGLRRTKMDIFLPRFKMQSKINLKPVLQSLGVSDIFSPSAADFRGISDTDGIFVSEAFHEARIEVTEAGTKAASATAMVLLKRSRSAVFKADRPFLFILRQISTGSLLFIGRVVNPADMP.

The signal sequence occupies residues 1-24 (MPQLSASSLFICLWLVDLCHVANS). Asn-50, Asn-106, Asn-140, Asn-147, and Asn-152 each carry an N-linked (GlcNAc...) asparagine glycan.

Belongs to the serpin family.

The protein localises to the secreted. Its function is as follows. Probable serine protease inhibitor. In Danio rerio (Zebrafish), this protein is Probable serpin E3 (serpine3).